We begin with the raw amino-acid sequence, 362 residues long: uncharacterized protein (362 aa).

A run of 7 helical transmembrane segments spans residues 32 to 52 (GAGW…VGAV), 75 to 95 (FVDA…ADGV), 106 to 126 (VVML…DLSV), 148 to 168 (AAVG…GVGA), 176 to 196 (GVGT…VVVV), 287 to 307 (VFAL…PVAM), and 329 to 349 (VLVA…CGMF).

This sequence belongs to the peptidase S58 family.

The protein localises to the cell membrane. Aminopeptidase. This is an uncharacterized protein from Mycobacterium leprae (strain TN).